Here is a 476-residue protein sequence, read N- to C-terminus: Aspartyl/glutamyl-tRNA(Asn/Gln) amidotransferase subunit B (476 aa).

Belongs to the GatB/GatE family. GatB subfamily. In terms of assembly, heterotrimer of A, B and C subunits.

The catalysed reaction is L-glutamyl-tRNA(Gln) + L-glutamine + ATP + H2O = L-glutaminyl-tRNA(Gln) + L-glutamate + ADP + phosphate + H(+). It catalyses the reaction L-aspartyl-tRNA(Asn) + L-glutamine + ATP + H2O = L-asparaginyl-tRNA(Asn) + L-glutamate + ADP + phosphate + 2 H(+). Functionally, allows the formation of correctly charged Asn-tRNA(Asn) or Gln-tRNA(Gln) through the transamidation of misacylated Asp-tRNA(Asn) or Glu-tRNA(Gln) in organisms which lack either or both of asparaginyl-tRNA or glutaminyl-tRNA synthetases. The reaction takes place in the presence of glutamine and ATP through an activated phospho-Asp-tRNA(Asn) or phospho-Glu-tRNA(Gln). The polypeptide is Aspartyl/glutamyl-tRNA(Asn/Gln) amidotransferase subunit B (Neisseria meningitidis serogroup B (strain ATCC BAA-335 / MC58)).